A 579-amino-acid chain; its full sequence is Peroxisomal membrane protein PEX28 (579 aa).

The Cytoplasmic portion of the chain corresponds to 1 to 243 (MSETSSSRRS…TWRNPTGTVT (243 aa)). Residues 40-70 (KSPTVAEDLSGSSSSGNSEMSHPSLTASSAT) are disordered. The span at 49-63 (SGSSSSGNSEMSHPS) shows a compositional bias: low complexity. A helical transmembrane segment spans residues 244 to 264 (SLILFTLICFNPMYLVILPIF). Topologically, residues 265-392 (RFVYGIVVPG…FQNEECSTKR (128 aa)) are peroxisomal. N-linked (GlcNAc...) asparagine glycosylation is present at N361. The helical transmembrane segment at 393-413 (FFTGFLLIVFLKILSPFVNWS) threads the bilayer. Over 414–579 (YVCSIFAWCL…RVIKNATPVA (166 aa)) the chain is Cytoplasmic.

This sequence belongs to the PEX28-32 family. Peroxin-28 subfamily.

The protein localises to the peroxisome membrane. Functionally, involved in the regulation of peroxisome number, size and distribution. The polypeptide is Peroxisomal membrane protein PEX28 (PEX28) (Saccharomyces cerevisiae (strain ATCC 204508 / S288c) (Baker's yeast)).